The sequence spans 339 residues: Dihydroorotate dehydrogenase (quinone) (339 aa).

FMN contacts are provided by residues 62-66 (AGMDK) and T86. K66 contacts substrate. 111-115 (NRMGF) lines the substrate pocket. FMN-binding residues include N139 and N172. Substrate is bound at residue N172. The active-site Nucleophile is S175. N177 provides a ligand contact to substrate. FMN is bound by residues K217 and T245. Substrate is bound at residue 246–247 (NT). Residues G268, G297, and 318–319 (YS) each bind FMN.

It belongs to the dihydroorotate dehydrogenase family. Type 2 subfamily. Monomer. The cofactor is FMN.

Its subcellular location is the cell membrane. It carries out the reaction (S)-dihydroorotate + a quinone = orotate + a quinol. Its pathway is pyrimidine metabolism; UMP biosynthesis via de novo pathway; orotate from (S)-dihydroorotate (quinone route): step 1/1. Functionally, catalyzes the conversion of dihydroorotate to orotate with quinone as electron acceptor. In Shewanella piezotolerans (strain WP3 / JCM 13877), this protein is Dihydroorotate dehydrogenase (quinone).